Reading from the N-terminus, the 103-residue chain is Large ribosomal subunit protein uL24 (103 aa).

It belongs to the universal ribosomal protein uL24 family. As to quaternary structure, part of the 50S ribosomal subunit.

In terms of biological role, one of two assembly initiator proteins, it binds directly to the 5'-end of the 23S rRNA, where it nucleates assembly of the 50S subunit. One of the proteins that surrounds the polypeptide exit tunnel on the outside of the subunit. The chain is Large ribosomal subunit protein uL24 from Oceanobacillus iheyensis (strain DSM 14371 / CIP 107618 / JCM 11309 / KCTC 3954 / HTE831).